A 361-amino-acid polypeptide reads, in one-letter code: Chorismate synthase (361 aa).

Residues 37-59 form a disordered region; sequence TEEDLQHDLDRRRPGTSRYTTPR. Over residues 40–49 the composition is skewed to basic and acidic residues; that stretch reads DLQHDLDRRR. NADP(+)-binding residues include Arg48 and Arg54. Residues 125–127, 238–239, Gly278, 293–297, and Arg319 each bind FMN; these read RSS, NA, and KPTSS.

It belongs to the chorismate synthase family. As to quaternary structure, homotetramer. It depends on FMNH2 as a cofactor.

It catalyses the reaction 5-O-(1-carboxyvinyl)-3-phosphoshikimate = chorismate + phosphate. The protein operates within metabolic intermediate biosynthesis; chorismate biosynthesis; chorismate from D-erythrose 4-phosphate and phosphoenolpyruvate: step 7/7. Functionally, catalyzes the anti-1,4-elimination of the C-3 phosphate and the C-6 proR hydrogen from 5-enolpyruvylshikimate-3-phosphate (EPSP) to yield chorismate, which is the branch point compound that serves as the starting substrate for the three terminal pathways of aromatic amino acid biosynthesis. This reaction introduces a second double bond into the aromatic ring system. The sequence is that of Chorismate synthase from Erwinia tasmaniensis (strain DSM 17950 / CFBP 7177 / CIP 109463 / NCPPB 4357 / Et1/99).